Reading from the N-terminus, the 83-residue chain is Mitochondrial import inner membrane translocase subunit Tim8 B (83 aa).

Position 2 is an N-acetylalanine (alanine 2). A Twin CX3C motif motif is present at residues 36–59 (CWDKCVEKPGNRLDSRTENCLSSC). 2 disulfide bridges follow: cysteine 36–cysteine 59 and cysteine 40–cysteine 55.

The protein belongs to the small Tim family. As to quaternary structure, heterohexamer; possibly composed of 3 copies of TIMM8B and 3 copies of TIMM13, named soluble 70 kDa complex. Associates with the TIM22 complex, whose core is composed of TIMM22. Ubiquitous, with highest expression in heart, kidney, liver and skeletal muscle.

The protein localises to the mitochondrion inner membrane. Probable mitochondrial intermembrane chaperone that participates in the import and insertion of some multi-pass transmembrane proteins into the mitochondrial inner membrane. Also required for the transfer of beta-barrel precursors from the TOM complex to the sorting and assembly machinery (SAM complex) of the outer membrane. Acts as a chaperone-like protein that protects the hydrophobic precursors from aggregation and guide them through the mitochondrial intermembrane space. This is Mitochondrial import inner membrane translocase subunit Tim8 B (TIMM8B) from Homo sapiens (Human).